We begin with the raw amino-acid sequence, 345 residues long: D-fructose 1,6-bisphosphatase class 2/sedoheptulose 1,7-bisphosphatase (345 aa).

Residues Asp-33, Glu-57, Asp-97, and Glu-100 each contribute to the Mn(2+) site. Substrate is bound by residues 100–102, Tyr-131, 176–178, and 198–200; these read EGT, RPR, and DGD. Position 225 (Glu-225) interacts with Mn(2+).

The protein belongs to the FBPase class 2 family. As to quaternary structure, homotetramer. It depends on Mn(2+) as a cofactor.

It catalyses the reaction beta-D-fructose 1,6-bisphosphate + H2O = beta-D-fructose 6-phosphate + phosphate. It carries out the reaction D-sedoheptulose 1,7-bisphosphate + H2O = D-sedoheptulose 7-phosphate + phosphate. It participates in carbohydrate biosynthesis; Calvin cycle. In terms of biological role, catalyzes the hydrolysis of fructose 1,6-bisphosphate (Fru 1,6-P2) and sedoheptulose 1,7-bisphosphate (Sed 1,7-P2) to fructose 6-phosphate and sedoheptulose 7-phosphate, respectively. The sequence is that of D-fructose 1,6-bisphosphatase class 2/sedoheptulose 1,7-bisphosphatase from Crocosphaera subtropica (strain ATCC 51142 / BH68) (Cyanothece sp. (strain ATCC 51142)).